The primary structure comprises 351 residues: Pentatricopeptide repeat-containing protein At3g56030, mitochondrial (351 aa).

A mitochondrion-targeting transit peptide spans Met-1–Phe-41. PPR repeat units lie at residues Arg-124 to Leu-158, Ser-159 to Val-193, Asp-194 to Glu-224, and Asp-232 to Val-266.

Belongs to the PPR family. P subfamily.

Its subcellular location is the mitochondrion. This chain is Pentatricopeptide repeat-containing protein At3g56030, mitochondrial, found in Arabidopsis thaliana (Mouse-ear cress).